Reading from the N-terminus, the 59-residue chain is UPF0434 protein Sputw3181_2540 (59 aa).

It belongs to the UPF0434 family.

In Shewanella sp. (strain W3-18-1), this protein is UPF0434 protein Sputw3181_2540.